A 198-amino-acid polypeptide reads, in one-letter code: Protein GrpE (198 aa).

Residues 1-32 (MTTEKETATPADVEVASQEEQIDQTTEAQVEE) are disordered.

It belongs to the GrpE family. As to quaternary structure, homodimer.

The protein localises to the cytoplasm. Functionally, participates actively in the response to hyperosmotic and heat shock by preventing the aggregation of stress-denatured proteins, in association with DnaK and GrpE. It is the nucleotide exchange factor for DnaK and may function as a thermosensor. Unfolded proteins bind initially to DnaJ; upon interaction with the DnaJ-bound protein, DnaK hydrolyzes its bound ATP, resulting in the formation of a stable complex. GrpE releases ADP from DnaK; ATP binding to DnaK triggers the release of the substrate protein, thus completing the reaction cycle. Several rounds of ATP-dependent interactions between DnaJ, DnaK and GrpE are required for fully efficient folding. The chain is Protein GrpE from Haemophilus ducreyi (strain 35000HP / ATCC 700724).